Here is a 290-residue protein sequence, read N- to C-terminus: Thioredoxin-like protein 1 (290 aa).

The region spanning 24–104 is the Thioredoxin domain; the sequence is VDCYADWCGP…PQALKEKVAL (81 aa). A disulfide bridge links Cys31 with Cys34. One can recognise a PITH domain in the interval 118–290; the sequence is SSSAPVKGFA…SKGKLQKVEA (173 aa).

Its subcellular location is the cytoplasm. The protein resides in the nucleus. Functionally, has a role in cellular detoxification of alkyl hydroperoxide. This is Thioredoxin-like protein 1 (txl1) from Schizosaccharomyces pombe (strain 972 / ATCC 24843) (Fission yeast).